Here is a 507-residue protein sequence, read N- to C-terminus: E3 ubiquitin-protein ligase makorin-3 (507 aa).

The span at 1–21 (MEEPAAPSEAHEAAGAQAGAE) shows a compositional bias: low complexity. 2 disordered regions span residues 1–48 (MEEP…DSAL) and 69–89 (RGGL…PLPS). The segment at 95–122 (WTKQIICRYYIHGQCKEGENCRYSHDLS) adopts a C3H1-type 1 zinc-finger fold. The disordered stretch occupies residues 126–149 (MATEGGVSPPGASAGGGPSTAAHI). The C3H1-type 2 zinc finger occupies 238 to 265 (GSGLRFCYYASRGVCFRGESCMYLHGDI). The interval 266 to 293 (CDMCGLQTLHPMDAAQREEHMRACIEAH) is makorin-type Cys-His. The RING-type zinc finger occupies 311–365 (CGICMEVVYEKANPNDRRFGILSNCNHSFCIRCIRRWRSARQFENRIVKSCPQCR). A C3H1-type 3 zinc finger spans residues 394 to 423 (AMSNKACRYFAEGRGNCPFGDTCFYKHEYP).

Ubiquitous.

It is found in the nucleus. It catalyses the reaction S-ubiquitinyl-[E2 ubiquitin-conjugating enzyme]-L-cysteine + [acceptor protein]-L-lysine = [E2 ubiquitin-conjugating enzyme]-L-cysteine + N(6)-ubiquitinyl-[acceptor protein]-L-lysine.. It participates in protein modification; protein ubiquitination. E3 ubiquitin ligase catalyzing the covalent attachment of ubiquitin moieties onto substrate proteins. Acts as a key developmental timer that helps ensure puberty begins at the appropriate age, by inhibiting premature activation of the reproductive hormone cascade. Epigenetically regulates GNRH1 transcription by disrupting the binding of methyl-DNA binding protein 3/MBD3 to the promoter of GNRH1. Mechanistically, mediates the non-proteolytic ubiquitination of MBD3 at multiple sites with 'Lys27' ubiquitin linkages and thereby regulates the methylation status of the genome, including GNRH1 promoter. Modulates the stability and translation of GNRH1 mRNA by mediating the non-proteolytic ubiquitination of PABP family members PABPC1, PABPC3 and PABPC4 at multiple sites. Also participates in the maintenance of genomic and epigenomic stability by regulating the abundance of APEX2 via 'Lys-48'-linked ubiquitination. The sequence is that of E3 ubiquitin-protein ligase makorin-3 (MKRN3) from Homo sapiens (Human).